A 243-amino-acid chain; its full sequence is Myrosinase MB2 (243 aa).

The N-linked (GlcNAc...) asparagine glycan is linked to Asn30. Tyr51 contributes to the substrate binding site. The active-site Nucleophile is Glu125. Substrate contacts are provided by residues Trp173 and 180-181; that span reads EF. Asn216 is a glycosylation site (N-linked (GlcNAc...) asparagine).

The protein belongs to the glycosyl hydrolase 1 family. As to quaternary structure, homodimer. As to expression, in vacuoles called myrosin grains of a certain class of cells, myrosin cells, distributed in the cotyledons and the axis of the embryo as well as in different organs of the growing plant.

The protein resides in the vacuole. The enzyme catalyses a thioglucoside + H2O = a sugar + a thiol.. In terms of biological role, degradation of glucosinolates (glucose residue linked by a thioglucoside bound to an amino acid derivative) to glucose, sulfate and any of the products: thiocyanates, isothiocyanates, nitriles, epithionitriles or oxazolidine-2-thiones. This is Myrosinase MB2 from Sinapis alba (White mustard).